A 440-amino-acid chain; its full sequence is tRNA-2-methylthio-N(6)-dimethylallyladenosine synthase (440 aa).

Residues 4–122 enclose the MTTase N-terminal domain; the sequence is KSYYIITHGC…LPKILERVFE (119 aa). Cys-13, Cys-49, Cys-83, Cys-159, Cys-163, and Cys-166 together coordinate [4Fe-4S] cluster. A Radical SAM core domain is found at 145 to 375; the sequence is REPGVRAWVT…IELQNGISLE (231 aa). In terms of domain architecture, TRAM spans 378–440; sequence KNEEGNIHEI…KLFHLEGVLV (63 aa).

Belongs to the methylthiotransferase family. MiaB subfamily. Monomer. [4Fe-4S] cluster is required as a cofactor.

Its subcellular location is the cytoplasm. The enzyme catalyses N(6)-dimethylallyladenosine(37) in tRNA + (sulfur carrier)-SH + AH2 + 2 S-adenosyl-L-methionine = 2-methylsulfanyl-N(6)-dimethylallyladenosine(37) in tRNA + (sulfur carrier)-H + 5'-deoxyadenosine + L-methionine + A + S-adenosyl-L-homocysteine + 2 H(+). Functionally, catalyzes the methylthiolation of N6-(dimethylallyl)adenosine (i(6)A), leading to the formation of 2-methylthio-N6-(dimethylallyl)adenosine (ms(2)i(6)A) at position 37 in tRNAs that read codons beginning with uridine. This chain is tRNA-2-methylthio-N(6)-dimethylallyladenosine synthase, found in Carboxydothermus hydrogenoformans (strain ATCC BAA-161 / DSM 6008 / Z-2901).